The chain runs to 388 residues: Succinate--CoA ligase [ADP-forming] subunit beta (388 aa).

The 236-residue stretch at 9–244 (KEIFRSMGVA…LEEEDPKEIE (236 aa)) folds into the ATP-grasp domain. ATP contacts are provided by residues lysine 46, 53-55 (GRG), glutamate 99, cysteine 102, and glutamate 107. Mg(2+) contacts are provided by asparagine 199 and aspartate 213. Substrate contacts are provided by residues asparagine 264 and 321-323 (GIM).

It belongs to the succinate/malate CoA ligase beta subunit family. Heterotetramer of two alpha and two beta subunits. It depends on Mg(2+) as a cofactor.

It catalyses the reaction succinate + ATP + CoA = succinyl-CoA + ADP + phosphate. The enzyme catalyses GTP + succinate + CoA = succinyl-CoA + GDP + phosphate. Its pathway is carbohydrate metabolism; tricarboxylic acid cycle; succinate from succinyl-CoA (ligase route): step 1/1. Its function is as follows. Succinyl-CoA synthetase functions in the citric acid cycle (TCA), coupling the hydrolysis of succinyl-CoA to the synthesis of either ATP or GTP and thus represents the only step of substrate-level phosphorylation in the TCA. The beta subunit provides nucleotide specificity of the enzyme and binds the substrate succinate, while the binding sites for coenzyme A and phosphate are found in the alpha subunit. The chain is Succinate--CoA ligase [ADP-forming] subunit beta from Staphylococcus aureus (strain Mu3 / ATCC 700698).